The following is a 335-amino-acid chain: MSELCVGINGFGRIGRLVLRACLQKGIKVTAINDPFIDLQYMVYMFKYDSTHGRYKGEVHMEDGKLIVDGQAISVFQCMKPAEIPWGDAGALYVVESTGVFLSIEKASAHIQGGAKRVVVSAPSPDAPMFVMGVNQDKYDPSSMTIVSNASCTTNCLAPLAKVIHDNFGIEEALMTTVHAYTATQKTVDGPSAKAWRDGRGAHQNIIPASTGAAKAVGKVIPELNGKLTGMAFRVPVADVSVVDLTCRLTRPASYANIKESVKKAAHGPMKGILGYTEDSVVSSDFVGDTHSSIFDAGAGISLNDNFVKLISWYDNEFGYSHRVADLLMYMHSKE.

NAD(+)-binding positions include 13–14 (RI), aspartate 34, and methionine 79. D-glyceraldehyde 3-phosphate contacts are provided by residues 151 to 153 (SCT), threonine 182, 211 to 212 (TG), and arginine 234. Cysteine 152 functions as the Nucleophile in the catalytic mechanism. Asparagine 316 contacts NAD(+).

It belongs to the glyceraldehyde-3-phosphate dehydrogenase family. As to quaternary structure, homotetramer.

The protein resides in the cytoplasm. The catalysed reaction is D-glyceraldehyde 3-phosphate + phosphate + NAD(+) = (2R)-3-phospho-glyceroyl phosphate + NADH + H(+). It participates in carbohydrate degradation; glycolysis; pyruvate from D-glyceraldehyde 3-phosphate: step 1/5. In terms of biological role, glyceraldehyde-3-phosphate dehydrogenase is a key enzyme in glycolysis that catalyzes the first step of the pathway by converting D-glyceraldehyde 3-phosphate (G3P) into 3-phospho-D-glyceroyl phosphate. This chain is Glyceraldehyde-3-phosphate dehydrogenase 2 (gapdh-2), found in Danio rerio (Zebrafish).